The sequence spans 1206 residues: Cilia- and flagella-associated protein 157 (1206 aa).

Disordered regions lie at residues 26–52, 79–109, 125–173, and 327–405; these read GGGG…GRDL, RAEQ…QQAP, EATC…RGPL, and GSGK…EEDW. 3 stretches are compositionally biased toward low complexity: residues 88–109, 156–173, and 385–397; these read GRPQ…QQAP, AKAV…RGPL, and QQLG…QPGG. Coiled coils occupy residues 634–732, 799–833, and 876–903; these read TDEL…KTKD, TEKL…LARR, and LHLA…KTAE. Disordered stretches follow at residues 936-990, 1011-1072, and 1168-1206; these read TTTN…DELS, LSHG…GATS, and PWGK…SLKV. Low complexity-rich tracts occupy residues 951 to 973 and 1014 to 1035; these read AGAD…SSSA and GPLS…ALAG. 2 stretches are compositionally biased toward gly residues: residues 1037–1046 and 1058–1067; these read WGPGSPGGSR and SAGGMGGPQG. Polar residues-rich tracts occupy residues 1175–1184 and 1193–1206; these read QQPLTTTKHS and GPSN…SLKV.

This sequence belongs to the CFAP157 family.

Its subcellular location is the cell projection. It localises to the cilium. The protein resides in the flagellum. In Chlamydomonas reinhardtii (Chlamydomonas smithii), this protein is Cilia- and flagella-associated protein 157.